A 535-amino-acid chain; its full sequence is Pyrichalasin C-18 hydroxylase (535 aa).

Residues 42–62 (LPSGTLIVLAALSLALLVAVL) form a helical membrane-spanning segment. Asparagine 139 and asparagine 222 each carry an N-linked (GlcNAc...) asparagine glycan. Cysteine 479 serves as a coordination point for heme.

The protein belongs to the cytochrome P450 family. Requires heme as cofactor.

The protein localises to the membrane. Its pathway is mycotoxin biosynthesis. Cytochrome P450 monooxygenase; part of the gene cluster that mediates the biosynthesis of the mycotoxin pyrichalasin H, a tyrosine-derived cytochalasan that inhibits the growth of rice seedlings, but also inhibits lymphocyte capping and actin polymerization and alters cell morphology. Pyrichalasin H is indicated as the responsible agent for the genus-specific pathogenicity of M.grisea toward crabgrass. The first step in the pathway is catalyzed by the O-methyltransferase pyiA which methylates free tyrosine to generate the precursor O-methyltyrosine. The hybrid PKS-NRPS pyiS, assisted by the enoyl reductase pyiC, are responsible for fusion of the O-methyltyrosine precursor and the polyketide backbone. The polyketide synthase module (PKS) of pyiS is responsible for the synthesis of the polyketide backbone and the downstream nonribosomal peptide synthetase (NRPS) amidates the carboxyl end of the polyketide with the O-methyltyrosine precursor. As the NRPS A-domain demonstrates substrate tolerance, pyiS can also use phenylalanine, tyrosine and even para-chlorophenylalanine as amino acid precursor, which leads to the production of novel cytochalasans, including halogenated cytochalasans. Because pyiS lacks a designated enoylreductase (ER) domain, the required activity is provided the enoyl reductase pyiC. Reduction by the hydrolyase pyiE leads to 1,5-dihydropyrrolone, which is substrate for dehydration and intra-molecular Diels-Alder cyclization by the Diels-Alderase pyiF to yield the required isoindolone-fused macrocycle. The tailoring cytochrome P450 monooxygenases piyD and piyG catalyze the hydroxylation at C-18 and C-7, respectivily, whereas the short-chain dehydrogenase/reductase pyiH reduces the carbonyl at C-21 in preparation for the transfer of an acetyl group by the acetyltransferase pyiB. These 3 reactions whose order is not clear yet, lead to the production of O-methylpyrichalasin J, a deacetylated pyrichalasin H. Finally, pyiB to converts O-methylpyrichalasin J into the final product pyrichalasin H via acetylation of C-21. The sequence is that of Pyrichalasin C-18 hydroxylase from Pyricularia grisea (Crabgrass-specific blast fungus).